The chain runs to 385 residues: Probable splicing factor YJU2B (385 aa).

A disordered region spans residues methionine 1–tyrosine 26. At serine 40 the chain carries Phosphoserine. Residues leucine 182–alanine 214 adopt a coiled-coil conformation. Residues proline 257–glutamate 385 form a disordered region. The span at serine 258 to serine 271 shows a compositional bias: low complexity. At serine 306 the chain carries Phosphoserine. Residues glycine 359–alanine 373 are compositionally biased toward polar residues.

The protein belongs to the CWC16 family.

It is found in the nucleus. In terms of biological role, may be involved in mRNA splicing. In Mus musculus (Mouse), this protein is Probable splicing factor YJU2B (Yju2b).